The sequence spans 504 residues: Maturase K (504 aa).

Belongs to the intron maturase 2 family. MatK subfamily.

It localises to the plastid. Its subcellular location is the chloroplast. Its function is as follows. Usually encoded in the trnK tRNA gene intron. Probably assists in splicing its own and other chloroplast group II introns. This is Maturase K from Quercus coccifera (Kermes oak).